The following is a 433-amino-acid chain: Lipase 2 (433 aa).

The short motif at histidine 165–glycine 167 is the Involved in the stabilization of the negatively charged intermediate by the formation of the oxyanion hole element. The active-site Charge relay system is serine 239. Catalysis depends on residues aspartate 361 and histidine 391.

It belongs to the 'GDXG' lipolytic enzyme family.

The catalysed reaction is a triacylglycerol + H2O = a diacylglycerol + a fatty acid + H(+). This is Lipase 2 (lip2) from Moraxella sp. (strain TA144).